We begin with the raw amino-acid sequence, 589 residues long: Intermediate filament protein ifb-1 (589 aa).

Residues 1 to 42 form a disordered region; the sequence is MSSHKESSEYEMQYRSTIQPRTAVRSQSRQSGNYVSGGNGAG. The head stretch occupies residues 8-84; the sequence is SEYEMQYRST…LEATDKEKKT (77 aa). The segment covering 14 to 30 has biased composition (polar residues); it reads YRSTIQPRTAVRSQSRQ. Positions 81 to 433 constitute an IF rod domain; that stretch reads EKKTLQGLND…KMLEGEETRV (353 aa). Positions 85 to 116 are coil 1A; the sequence is LQGLNDRLGNYIDRVKKLEEQNRKLVADLDEL. The segment at 117–130 is linker 1; that stretch reads RGKWGKDTSEIKIK. The tract at residues 131 to 268 is coil 1B; sequence YSESLSTARK…RVHEQEVKEL (138 aa). The interval 269-285 is linker 12; that stretch reads QALLAQAPADTREFFKN. The tract at residues 286–433 is coil 2; it reads ELALAIRDIK…KMLEGEETRV (148 aa). Positions 434–588 are tail; the sequence is GLTQMVEQAV…THTQKTIQSG (155 aa). The disordered stretch occupies residues 444-470; the sequence is KTHSLQQQENTDSTRSVRGEVSTKTTF. The LTD domain occupies 466 to 584; the sequence is TKTTFQRSAK…EERATHTQKT (119 aa).

Belongs to the intermediate filament family. In terms of assembly, forms some heteromeric filaments with ifa-1, ifa-2, ifa-3 and probably ifa-4. Expressed in epidermal cells. Expressed in amphid sensory neurons, the excretory cells, the vulva, the uterus, the rectum and some neurons of the tail. Isoform a and isoform b display a similar pattern of expression. Isoform a is predominant in pharyngeal tonofilaments.

The protein resides in the cytoplasm. Its function is as follows. Cytoplasmic intermediate filaments provide mechanical strength to cells. Essential protein, involved in attachment structures in epidermal cells that connect muscles to the external cuticle. Required in morphogenesis and epidermal integrity. Probable component of embryonic epidermal attachment structures. Functions in larval muscle attachment independently of ifa-2. This Caenorhabditis elegans protein is Intermediate filament protein ifb-1 (ifb-1).